Reading from the N-terminus, the 75-residue chain is Peptide Ctri10033 (75 aa).

Positions 1-22 (MNSKYLFVFLILIVTFTDLCQG) are cleaved as a signal peptide. R43 carries the arginine amide modification. A propeptide spanning residues 47-75 (ELGSQYDYLQDFRKRELDLDDLLSKFPDY) is cleaved from the precursor.

The protein belongs to the non-disulfide-bridged peptide (NDBP) superfamily. Short antimicrobial peptide (group 4) family. As to expression, expressed by the venom gland.

It localises to the secreted. This is Peptide Ctri10033 from Chaerilus tricostatus (Scorpion).